Consider the following 811-residue polypeptide: MAPLLFLPILQLLLLYCTKSAQAQLNISIGSSLTPQGINNSWISPTADFAFGFLAVDGNSSSYLLAVWFNKIADKTVIWYAKTSSNRQDDTIPIQVQAGSILKLADGALSLRDPSGNEVWNPRVTDVGYARMLDTGNFRLLGTDGATKWESFGDPSDTILPTQVLPLGTALHSRLLATDYSNGRFQLNVQDDGNLVLYLVAVPSAYYHDPYWASNTVGNGSQLVFNETGRIYFTLTNGSQINITSAGVDSMGDFFHRATLDTDGVFRQYIYPKSKQARSLWQEQWRAVDALPENICQTIQTKVGSGACGFNSYCTFDGTKNTTNCLCPQRYKFFDNERTYKGCRPDFEPQSCDLDETAAMVQYEMTPIDRINWPLSDYEQYSPIDETECRRLCVIDCFCSVAVFNKPSNTCYKKKLPLSNGNMDSSLQATVLLKVPRSTNSPSMISSGSSKWKKDKKYWILGSSLFFGSSVLVNFLLIFVLLFGTYCSITSRKKTQLSQLPSNSGLPSKIFTYRELEKATGGFHEVLGTGASGIVYKGQLQDECGTNIAVKKIEKLQQEAQKEFLVEVQTIGQTFHRNLVRLLGFCNEGTEKLLVYEFMSNGSLNTFLFNDSHPHWSLRVQVALGVSRGLFYLHEECNKQIIHCDMKPQNILLDDNFVAKISDFGLAKLLPVNQTQTNTGIRGTRGYVAPEWFKNIGITSKVDVYSFGVILLELVCCRKNVELEVADEEQTILTYWANDCYRCGRIDLLVASDDEAIFNIKKVERFVAVALWCLQEEPSMRPTMHKVMQMLDGAVQIPTPPDPSSYISSLA.

Residues Met1 to Ala23 form the signal peptide. Residues Gln24 to Gly153 form the Bulb-type lectin domain. The Extracellular portion of the chain corresponds to Gln24–Ser464. 7 N-linked (GlcNAc...) asparagine glycosylation sites follow: Asn26, Asn39, Asn59, Asn219, Asn226, Asn237, and Asn242. The EGF-like; atypical domain maps to Pro292–Arg344. Disulfide bonds link Cys296–Cys314, Cys308–Cys325, Cys327–Cys343, Cys389–Cys411, and Cys393–Cys399. Asn321 carries an N-linked (GlcNAc...) asparagine glycan. A PAN domain is found at Cys352–Pro436. Residues Leu465–Thr485 traverse the membrane as a helical segment. Over Tyr486–Ala811 the chain is Cytoplasmic. Positions Gly521–Val795 constitute a Protein kinase domain. ATP contacts are provided by residues Leu527 to Val535 and Lys551. Residue Asp645 is the Proton acceptor of the active site.

This sequence belongs to the protein kinase superfamily. Ser/Thr protein kinase family.

The protein resides in the membrane. The enzyme catalyses L-seryl-[protein] + ATP = O-phospho-L-seryl-[protein] + ADP + H(+). The catalysed reaction is L-threonyl-[protein] + ATP = O-phospho-L-threonyl-[protein] + ADP + H(+). Involved in resistance against the herbivorous insect brown planthopper (N.lugens, BPH). Member of the BPH3 (BPH resistance locus 3) cluster which contains LECRK1, LECRK2 and LECRK3. In Oryza sativa subsp. japonica (Rice), this protein is G-type lectin S-receptor-like serine/threonine-protein kinase LECRK2.